A 137-amino-acid polypeptide reads, in one-letter code: Large ribosomal subunit protein uL16 (137 aa).

Basic residues predominate over residues 1–17 (MLQPKRTKFRKTHKGRN). The interval 1–23 (MLQPKRTKFRKTHKGRNRGLAQN) is disordered.

This sequence belongs to the universal ribosomal protein uL16 family. Part of the 50S ribosomal subunit.

Its function is as follows. Binds 23S rRNA and is also seen to make contacts with the A and possibly P site tRNAs. The protein is Large ribosomal subunit protein uL16 of Pseudoalteromonas translucida (strain TAC 125).